A 161-amino-acid chain; its full sequence is Putative 4-hydroxy-4-methyl-2-oxoglutarate aldolase (161 aa).

Residues 75–78 (GDQL) and Arg-97 contribute to the substrate site. Asp-98 contributes to the a divalent metal cation binding site.

Belongs to the class II aldolase/RraA-like family. As to quaternary structure, homotrimer. Requires a divalent metal cation as cofactor.

It carries out the reaction 4-hydroxy-4-methyl-2-oxoglutarate = 2 pyruvate. It catalyses the reaction oxaloacetate + H(+) = pyruvate + CO2. Catalyzes the aldol cleavage of 4-hydroxy-4-methyl-2-oxoglutarate (HMG) into 2 molecules of pyruvate. Also contains a secondary oxaloacetate (OAA) decarboxylase activity due to the common pyruvate enolate transition state formed following C-C bond cleavage in the retro-aldol and decarboxylation reactions. In Vibrio cholerae serotype O1 (strain ATCC 39315 / El Tor Inaba N16961), this protein is Putative 4-hydroxy-4-methyl-2-oxoglutarate aldolase.